Here is a 117-residue protein sequence, read N- to C-terminus: UPF0102 protein YE3728 (117 aa).

The protein belongs to the UPF0102 family.

This Yersinia enterocolitica serotype O:8 / biotype 1B (strain NCTC 13174 / 8081) protein is UPF0102 protein YE3728.